The chain runs to 443 residues: Chromosomal replication initiator protein DnaA (443 aa).

Positions 1–73 (MYGDYRQIWE…YDAASKVTNR (73 aa)) are domain I, interacts with DnaA modulators. The interval 73-106 (RFIEIKILSEDEEEYREIKESIERENSSESTLLS) is domain II. The interval 107–323 (TLNPKYTFDT…GALIRIVAFA (217 aa)) is domain III, AAA+ region. The ATP site is built by Gly151, Gly153, Lys154, and Thr155. Residues 324–443 (TLTKSNIDLE…EELKKRIKGY (120 aa)) form a domain IV, binds dsDNA region.

It belongs to the DnaA family. Oligomerizes as a right-handed, spiral filament on DNA at oriC.

The protein localises to the cytoplasm. Its function is as follows. Plays an essential role in the initiation and regulation of chromosomal replication. ATP-DnaA binds to the origin of replication (oriC) to initiate formation of the DNA replication initiation complex once per cell cycle. Binds the DnaA box (a 9 base pair repeat at the origin) and separates the double-stranded (ds)DNA. Forms a right-handed helical filament on oriC DNA; dsDNA binds to the exterior of the filament while single-stranded (ss)DNA is stabiized in the filament's interior. The ATP-DnaA-oriC complex binds and stabilizes one strand of the AT-rich DNA unwinding element (DUE), permitting loading of DNA polymerase. After initiation quickly degrades to an ADP-DnaA complex that is not apt for DNA replication. Binds acidic phospholipids. This Caldanaerobacter subterraneus subsp. tengcongensis (strain DSM 15242 / JCM 11007 / NBRC 100824 / MB4) (Thermoanaerobacter tengcongensis) protein is Chromosomal replication initiator protein DnaA.